Here is a 117-residue protein sequence, read N- to C-terminus: Peptidyl-tRNA hydrolase (117 aa).

It belongs to the PTH2 family.

It localises to the cytoplasm. The catalysed reaction is an N-acyl-L-alpha-aminoacyl-tRNA + H2O = an N-acyl-L-amino acid + a tRNA + H(+). Functionally, the natural substrate for this enzyme may be peptidyl-tRNAs which drop off the ribosome during protein synthesis. This Thermoplasma volcanium (strain ATCC 51530 / DSM 4299 / JCM 9571 / NBRC 15438 / GSS1) protein is Peptidyl-tRNA hydrolase.